The following is a 159-amino-acid chain: Ribosomal RNA large subunit methyltransferase H (159 aa).

S-adenosyl-L-methionine-binding positions include Leu76, Gly108, and 127–132; that span reads FSKMTF.

This sequence belongs to the RNA methyltransferase RlmH family. Homodimer.

It localises to the cytoplasm. The catalysed reaction is pseudouridine(1915) in 23S rRNA + S-adenosyl-L-methionine = N(3)-methylpseudouridine(1915) in 23S rRNA + S-adenosyl-L-homocysteine + H(+). Specifically methylates the pseudouridine at position 1915 (m3Psi1915) in 23S rRNA. The polypeptide is Ribosomal RNA large subunit methyltransferase H (Shouchella clausii (strain KSM-K16) (Alkalihalobacillus clausii)).